The sequence spans 497 residues: Aspartyl/glutamyl-tRNA(Asn/Gln) amidotransferase subunit B (497 aa).

The protein belongs to the GatB/GatE family. GatB subfamily. Heterotrimer of A, B and C subunits.

The catalysed reaction is L-glutamyl-tRNA(Gln) + L-glutamine + ATP + H2O = L-glutaminyl-tRNA(Gln) + L-glutamate + ADP + phosphate + H(+). It catalyses the reaction L-aspartyl-tRNA(Asn) + L-glutamine + ATP + H2O = L-asparaginyl-tRNA(Asn) + L-glutamate + ADP + phosphate + 2 H(+). Its function is as follows. Allows the formation of correctly charged Asn-tRNA(Asn) or Gln-tRNA(Gln) through the transamidation of misacylated Asp-tRNA(Asn) or Glu-tRNA(Gln) in organisms which lack either or both of asparaginyl-tRNA or glutaminyl-tRNA synthetases. The reaction takes place in the presence of glutamine and ATP through an activated phospho-Asp-tRNA(Asn) or phospho-Glu-tRNA(Gln). This Nocardioides sp. (strain ATCC BAA-499 / JS614) protein is Aspartyl/glutamyl-tRNA(Asn/Gln) amidotransferase subunit B.